The following is a 242-amino-acid chain: Probable transcriptional regulatory protein Bmul_0984/BMULJ_02280 (242 aa).

It belongs to the TACO1 family.

The protein resides in the cytoplasm. The protein is Probable transcriptional regulatory protein Bmul_0984/BMULJ_02280 of Burkholderia multivorans (strain ATCC 17616 / 249).